The chain runs to 255 residues: Ornithine decarboxylase antizyme (255 aa).

This sequence belongs to the ODC antizyme family. In terms of assembly, interacts with ODC and thereby sterically blocks ODC homodimerization.

Its function is as follows. Ornithine decarboxylase (ODC) antizyme protein that negatively regulates ODC activity and intracellular polyamine biosynthesis in response to increased intracellular polyamine levels. Binds to ODC monomers, inhibiting the assembly of the functional ODC homodimer, and targets the monomers for ubiquitin-independent proteolytic destruction by the 26S proteasome. The protein is Ornithine decarboxylase antizyme (OAZ1) of Candida glabrata (strain ATCC 2001 / BCRC 20586 / JCM 3761 / NBRC 0622 / NRRL Y-65 / CBS 138) (Yeast).